Here is a 294-residue protein sequence, read N- to C-terminus: Acetylglutamate kinase (294 aa).

Residues 63–64, Arg85, and Asn188 each bind substrate; that span reads GG.

It belongs to the acetylglutamate kinase family. ArgB subfamily.

The protein resides in the cytoplasm. It carries out the reaction N-acetyl-L-glutamate + ATP = N-acetyl-L-glutamyl 5-phosphate + ADP. It participates in amino-acid biosynthesis; L-arginine biosynthesis; N(2)-acetyl-L-ornithine from L-glutamate: step 2/4. Its function is as follows. Catalyzes the ATP-dependent phosphorylation of N-acetyl-L-glutamate. This chain is Acetylglutamate kinase, found in Methanococcus maripaludis (strain C7 / ATCC BAA-1331).